Here is an 86-residue protein sequence, read N- to C-terminus: MKPGIHPEYRPVVFHDTSVDEYFVVGSTLQTDRTIEWKDGKTYPYFTLDVSSESHPFYTGKQRVVQAEGRIANFNRRFGQFSKDKD.

The protein belongs to the bacterial ribosomal protein bL31 family. Type B subfamily. Part of the 50S ribosomal subunit.

The polypeptide is Large ribosomal subunit protein bL31B (Vibrio campbellii (strain ATCC BAA-1116)).